The chain runs to 313 residues: Synaptophysin (313 aa).

Residues 1 to 25 (MLLLADMDVVNQLVAGGQFRVVKEP) are Cytoplasmic-facing. The 207-residue stretch at 21–227 (VVKEPLGFVK…NLWFVFKETG (207 aa)) folds into the MARVEL domain. The helical transmembrane segment at 26-49 (LGFVKVLQWVFAIFAFATCGSYSG) threads the bilayer. Residues 50–106 (ELQLSVDCANKTKSDLNIEVEFEYPFRLHEVYFEAPTCQGDPKKIFLVGNYSSSAEF) lie on the Vesicular side of the membrane. Asn-59 carries N-linked (GlcNAc...) asparagine glycosylation. Phosphotyrosine is present on Tyr-81. A glycan (N-linked (GlcNAc...) asparagine) is linked at Asn-99. Residues 107-130 (FVTVAVFAFLYSMGALATYIFLQN) traverse the membrane as a helical segment. The Cytoplasmic segment spans residues 131 to 137 (KYRENNK). The chain crosses the membrane as a helical span at residues 138–161 (GPMLDFLATAVFAFMWLVSSSAWA). At 162–199 (KGLSDVKMATDPENIIKGMHVCHQPGNTCKELRDPVTS) the chain is on the vesicular side. The chain crosses the membrane as a helical span at residues 200 to 223 (GLNTSVVFGFLNLVLWVGNLWFVF). Residues 224–313 (KETGWAAPFL…GAPTSFSNQM (90 aa)) are Cytoplasmic-facing. Residues 238-313 (GAPEKQPAPG…GAPTSFSNQM (76 aa)) are disordered. Over residues 253 to 263 (AGYGQGPGGYG) the composition is skewed to gly residues. The repeats, Gly/Tyr-rich stretch occupies residues 254–304 (GYGQGPGGYGPQDSYGPQGGYQPDYGQPASSGGGGYGPQGDYGQQGYGPQG). The span at 264–283 (PQDSYGPQGGYQPDYGQPAS) shows a compositional bias: low complexity. The segment covering 284–302 (SGGGGYGPQGDYGQQGYGP) has biased composition (gly residues).

It belongs to the synaptophysin/synaptobrevin family. In terms of assembly, homohexamer or homotetramer. Interacts with SRCIN1. Interacts with VAMP2; the interaction is inhibited by interaction of VAPM2 with SEPT8. Ubiquitinated; mediated by SIAH1 or SIAH2 and leading to its subsequent proteasomal degradation. Post-translationally, phosphorylated by SRC. As to expression, characteristic of a type of small (30-80 nm) neurosecretory vesicles, including presynaptic vesicles, but also vesicles of various neuroendocrine cells of both neuronal and epithelial phenotype.

The protein resides in the cytoplasmic vesicle. It localises to the secretory vesicle. Its subcellular location is the synaptic vesicle membrane. It is found in the synapse. The protein localises to the synaptosome. Functionally, possibly involved in structural functions as organizing other membrane components or in targeting the vesicles to the plasma membrane. Involved in the regulation of short-term and long-term synaptic plasticity. The sequence is that of Synaptophysin (SYP) from Bos taurus (Bovine).